We begin with the raw amino-acid sequence, 461 residues long: Zinc finger protein ZFP2 (461 aa).

13 C2H2-type zinc fingers span residues 102 to 124 (YECN…QRIH), 130 to 152 (YKCN…QRIH), 158 to 180 (YKCN…QRTH), 186 to 208 (YQCK…ERIH), 214 to 236 (YKCN…QRTH), 242 to 264 (YECN…QRSH), 270 to 292 (YECS…QRNH), 298 to 320 (YKCN…QRLH), 326 to 348 (FECN…RRIH), 354 to 376 (YECM…QVIH), 382 to 404 (YECN…QRIH), 410 to 432 (YECD…QRTH), and 438 to 460 (YQCN…QRTH).

It belongs to the krueppel C2H2-type zinc-finger protein family.

It localises to the nucleus. Probable transcription factor involved in neuronal differentiation and/or phenotypic maintenance. In Homo sapiens (Human), this protein is Zinc finger protein ZFP2 (ZFP2).